The following is a 665-amino-acid chain: Chaperone protein dnaK1 (665 aa).

The residue at position 198 (T198) is a Phosphothreonine; by autocatalysis. Positions 634–665 are disordered; it reads DDPWDNQMNSNSRNSRYGNSRDDDPWDNDYFL. The span at 642 to 651 shows a compositional bias: low complexity; sequence NSNSRNSRYG.

This sequence belongs to the heat shock protein 70 family.

Functionally, acts as a chaperone. The protein is Chaperone protein dnaK1 (dnaK1) of Prochlorococcus marinus subsp. pastoris (strain CCMP1986 / NIES-2087 / MED4).